A 437-amino-acid chain; its full sequence is Enolase (437 aa).

Gln162 is a binding site for (2R)-2-phosphoglycerate. Catalysis depends on Glu204, which acts as the Proton donor. Mg(2+) contacts are provided by Asp251, Glu297, and Asp324. (2R)-2-phosphoglycerate contacts are provided by Lys349, Arg378, Ser379, and Lys400. Residue Lys349 is the Proton acceptor of the active site.

It belongs to the enolase family. Mg(2+) is required as a cofactor.

The protein resides in the cytoplasm. It localises to the secreted. Its subcellular location is the cell surface. It catalyses the reaction (2R)-2-phosphoglycerate = phosphoenolpyruvate + H2O. The protein operates within carbohydrate degradation; glycolysis; pyruvate from D-glyceraldehyde 3-phosphate: step 4/5. In terms of biological role, catalyzes the reversible conversion of 2-phosphoglycerate (2-PG) into phosphoenolpyruvate (PEP). It is essential for the degradation of carbohydrates via glycolysis. The protein is Enolase of Chlorobium chlorochromatii (strain CaD3).